A 248-amino-acid chain; its full sequence is DNA-directed RNA polymerase subunit Rpo3 (248 aa).

Belongs to the archaeal Rpo3/eukaryotic RPB3 RNA polymerase subunit family. As to quaternary structure, part of the RNA polymerase complex.

The protein resides in the cytoplasm. It catalyses the reaction RNA(n) + a ribonucleoside 5'-triphosphate = RNA(n+1) + diphosphate. In terms of biological role, DNA-dependent RNA polymerase (RNAP) catalyzes the transcription of DNA into RNA using the four ribonucleoside triphosphates as substrates. The polypeptide is DNA-directed RNA polymerase subunit Rpo3 (Halobacterium salinarum (strain ATCC 29341 / DSM 671 / R1)).